The following is a 178-amino-acid chain: Aspartate carbamoyltransferase regulatory chain (178 aa).

Over residues 1–15 the composition is skewed to basic and acidic residues; sequence MNDREPNQKESKESV. Residues 1–23 form a disordered region; it reads MNDREPNQKESKESVNDAVPRAR. Zn(2+)-binding residues include Cys-133, Cys-138, Cys-159, and Cys-162.

Belongs to the PyrI family. In terms of assembly, contains catalytic and regulatory chains. Requires Zn(2+) as cofactor.

Its function is as follows. Involved in allosteric regulation of aspartate carbamoyltransferase. The protein is Aspartate carbamoyltransferase regulatory chain of Haloquadratum walsbyi (strain DSM 16790 / HBSQ001).